Consider the following 492-residue polypeptide: E3 ubiquitin-protein ligase ARIH2 (492 aa).

Polar residues predominate over residues Met-1–Asp-11. Positions Met-1–Tyr-37 are disordered. A compositionally biased stretch (acidic residues) spans Ser-12–Asp-36. The UBA-like stretch occupies residues Thr-64–Asn-111. Residues Pro-134 to Lys-343 form a TRIAD supradomain region. Zn(2+) is bound by residues Cys-138, Cys-141, Cys-155, His-157, Cys-160, Cys-163, Cys-182, Cys-187, Cys-227, Cys-232, Cys-248, Cys-251, Cys-256, Cys-259, His-264, Cys-269, Cys-296, and Cys-299. The RING-type 1 zinc finger occupies Cys-138 to Cys-187. Residues Asp-207–Cys-269 form an IBR-type zinc finger. The RING-type 2; atypical zinc-finger motif lies at Cys-296 to Cys-325. Cys-309 is a catalytic residue. Residues Cys-314, Cys-317, Cys-322, Cys-325, His-332, and Cys-339 each coordinate Zn(2+). At Ser-352 the chain carries Phosphoserine. The tract at residues Arg-358–Thr-492 is ariadne domain.

This sequence belongs to the RBR family. Ariadne subfamily. As to quaternary structure, interacts (via RING-type zinc finger 1) with UBE2L3. Interacts (via RING-type zinc finger 2) with UBE2N. Interacts with neddylated CUL5. Interacts (via RING-type 2) with GFI1B. Interacts with GFI1; prevents its ubiquitination and proteasomal degradation. Interacts with DCUN1D1 (via UBA-like domain); promotes DCUN1D1 ubiquitination. Ubiquitinated. Ubiquitination promotes proteasomal degradation.

The protein resides in the nucleus. It localises to the cytoplasm. The enzyme catalyses [E2 ubiquitin-conjugating enzyme]-S-ubiquitinyl-L-cysteine + [acceptor protein]-L-lysine = [E2 ubiquitin-conjugating enzyme]-L-cysteine + [acceptor protein]-N(6)-ubiquitinyl-L-lysine.. The protein operates within protein modification; protein ubiquitination. Its activity is regulated as follows. Autoinhibited by the ariadne domain, which masks the second RING-type zinc finger that contains the active site and inhibits the E3 activity. Inhibition is relieved upon binding to neddylated cullin-RING ubiquitin ligase complexes, which activate the E3 ligase activity of ARIH1. Its function is as follows. E3 ubiquitin-protein ligase, which catalyzes ubiquitination of target proteins together with ubiquitin-conjugating enzyme E2 UBE2L3. Acts as an atypical E3 ubiquitin-protein ligase by working together with cullin-5-RING ubiquitin ligase complex (ECS complex, also named CRL5 complex) and initiating ubiquitination of ECS substrates: associates with ECS complex and specifically mediates addition of the first ubiquitin on ECS targets. The initial ubiquitin is then elongated. E3 ubiquitin-protein ligase activity is activated upon binding to neddylated form of the ECS complex. Mediates 'Lys-6', 'Lys-48'- and 'Lys-63'-linked polyubiquitination. May play a role in myelopoiesis. The chain is E3 ubiquitin-protein ligase ARIH2 (Arih2) from Mus musculus (Mouse).